We begin with the raw amino-acid sequence, 361 residues long: Caffeic acid 3-O-methyltransferase 2 (361 aa).

128–134 (MNQDKVL) lines the substrate pocket. Residues 160-178 (AFEYHGTDPRFNKVFNQGM) form a substrate binding region. S-adenosyl-L-methionine contacts are provided by G206, D229, D249, M250, and K263. H267 serves as the catalytic Proton acceptor.

This sequence belongs to the class I-like SAM-binding methyltransferase superfamily. Cation-independent O-methyltransferase family. COMT subfamily. In terms of assembly, homodimer.

The catalysed reaction is (E)-caffeate + S-adenosyl-L-methionine = (E)-ferulate + S-adenosyl-L-homocysteine + H(+). Its pathway is aromatic compound metabolism; phenylpropanoid biosynthesis. In terms of biological role, catalyzes the conversion of caffeic acid to ferulic acid and of 5-hydroxyferulic acid to sinapic acid. The resulting products may subsequently be converted to the corresponding alcohols that are incorporated into lignins. The chain is Caffeic acid 3-O-methyltransferase 2 (COMT2) from Ocimum basilicum (Sweet basil).